Consider the following 197-residue polypeptide: Recombination protein RecR (197 aa).

The C4-type zinc-finger motif lies at 56–71 (CNVCFHFSADPICEIC). One can recognise a Toprim domain in the interval 79-173 (QTICVVADSR…KVTRIAFGLP (95 aa)).

This sequence belongs to the RecR family.

In terms of biological role, may play a role in DNA repair. It seems to be involved in an RecBC-independent recombinational process of DNA repair. It may act with RecF and RecO. The polypeptide is Recombination protein RecR (Rippkaea orientalis (strain PCC 8801 / RF-1) (Cyanothece sp. (strain PCC 8801))).